The chain runs to 165 residues: Ribosome maturation factor RimM (165 aa).

The region spanning 94–165 (EDEFYIADLN…YGILNYKREV (72 aa)) is the PRC barrel domain.

The protein belongs to the RimM family. In terms of assembly, binds ribosomal protein uS19.

Its subcellular location is the cytoplasm. An accessory protein needed during the final step in the assembly of 30S ribosomal subunit, possibly for assembly of the head region. Essential for efficient processing of 16S rRNA. May be needed both before and after RbfA during the maturation of 16S rRNA. It has affinity for free ribosomal 30S subunits but not for 70S ribosomes. This is Ribosome maturation factor RimM from Rickettsia canadensis (strain McKiel).